Here is an 89-residue protein sequence, read N- to C-terminus: Small ribosomal subunit protein uS15 (89 aa).

This sequence belongs to the universal ribosomal protein uS15 family. In terms of assembly, part of the 30S ribosomal subunit. Forms a bridge to the 50S subunit in the 70S ribosome, contacting the 23S rRNA.

Functionally, one of the primary rRNA binding proteins, it binds directly to 16S rRNA where it helps nucleate assembly of the platform of the 30S subunit by binding and bridging several RNA helices of the 16S rRNA. In terms of biological role, forms an intersubunit bridge (bridge B4) with the 23S rRNA of the 50S subunit in the ribosome. The sequence is that of Small ribosomal subunit protein uS15 from Azobacteroides pseudotrichonymphae genomovar. CFP2.